The sequence spans 207 residues: Small ribosomal subunit protein uS4 (207 aa).

The segment at 30-51 (DKSKFDSKPGQHGRTSGARTSD) is disordered. An S4 RNA-binding domain is found at 97 to 157 (SRLDNVVYRM…EKSKKQGRIA (61 aa)).

Belongs to the universal ribosomal protein uS4 family. Part of the 30S ribosomal subunit. Contacts protein S5. The interaction surface between S4 and S5 is involved in control of translational fidelity.

Its function is as follows. One of the primary rRNA binding proteins, it binds directly to 16S rRNA where it nucleates assembly of the body of the 30S subunit. Functionally, with S5 and S12 plays an important role in translational accuracy. The sequence is that of Small ribosomal subunit protein uS4 from Verminephrobacter eiseniae (strain EF01-2).